A 252-amino-acid chain; its full sequence is Probable transcriptional regulatory protein Bcav_1989 (252 aa).

Belongs to the TACO1 family.

The protein localises to the cytoplasm. In Beutenbergia cavernae (strain ATCC BAA-8 / DSM 12333 / CCUG 43141 / JCM 11478 / NBRC 16432 / NCIMB 13614 / HKI 0122), this protein is Probable transcriptional regulatory protein Bcav_1989.